Reading from the N-terminus, the 199-residue chain is Chorismate pyruvate-lyase (199 aa).

Belongs to the chorismate pyruvate-lyase type 2 family.

The enzyme catalyses chorismate = 4-hydroxybenzoate + pyruvate. In terms of biological role, removes the pyruvyl group from chorismate to provide 4-hydroxybenzoate (4HB). Involved in the synthesis of glycosylated p-hydroxybenzoic acid methyl esters (p-HBADs) and phenolic glycolipids (PGL) that play important roles in the pathogenesis of mycobacterial infections. This is Chorismate pyruvate-lyase from Mycobacterium bovis (strain ATCC BAA-935 / AF2122/97).